The sequence spans 226 residues: V-type proton ATPase subunit E 2 (226 aa).

It belongs to the V-ATPase E subunit family. V-ATPase is a heteromultimeric enzyme made up of two complexes: the ATP-hydrolytic V1 complex and the proton translocation V0 complex. The V1 complex consists of three catalytic AB heterodimers that form a heterohexamer, three peripheral stalks each consisting of EG heterodimers, one central rotor including subunits D and F, and the regulatory subunits C and H. The proton translocation complex V0 consists of the proton transport subunit a, a ring of proteolipid subunits c9c'', rotary subunit d, subunits e and f, and the accessory subunits ATP6AP1/Ac45 and ATP6AP2/PRR.

Its function is as follows. Subunit of the V1 complex of vacuolar(H+)-ATPase (V-ATPase), a multisubunit enzyme composed of a peripheral complex (V1) that hydrolyzes ATP and a membrane integral complex (V0) that translocates protons. V-ATPase is responsible for acidifying and maintaining the pH of intracellular compartments and in some cell types, is targeted to the plasma membrane, where it is responsible for acidifying the extracellular environment. This is V-type proton ATPase subunit E 2 (ATP6V1E2) from Bos taurus (Bovine).